A 101-amino-acid polypeptide reads, in one-letter code: Large ribosomal subunit protein uL6m (101 aa).

This sequence belongs to the universal ribosomal protein uL6 family.

Its subcellular location is the mitochondrion. The protein is Large ribosomal subunit protein uL6m (RPL6) of Marchantia polymorpha (Common liverwort).